Here is a 1232-residue protein sequence, read N- to C-terminus: Chromosome-associated kinesin KIF4A (1232 aa).

The 328-residue stretch at P9 to I336 folds into the Kinesin motor domain. Position 88-95 (G88–T95) interacts with ATP. Residues E350–V999 adopt a coiled-coil conformation. Position 394 is a phosphoserine (S394). The disordered stretch occupies residues A496–H515. The span at Q497–H515 shows a compositional bias: polar residues. A required for the interaction with PRC1 region spans residues Q663–H1232. Positions P793–R798 match the Nuclear localization signal motif. T799 is modified (phosphothreonine). Phosphoserine is present on residues S801, S810, S815, and S951. Position 995 is a phosphothreonine (T995). Residues A1000–H1232 form a globular region. S1001, S1013, S1017, S1028, and S1126 each carry phosphoserine. The interval C1086 to D1144 is CRD; required for [4Fe-4S] cluster binding and localization to the spindle midzone and midbody during anaphase and telophase. A disordered region spans residues Q1122–L1142. Residues R1132–L1142 are compositionally biased toward basic and acidic residues. At T1181 the chain carries Phosphothreonine. At S1186 the chain carries Phosphoserine. K1194 participates in a covalent cross-link: Glycyl lysine isopeptide (Lys-Gly) (interchain with G-Cter in SUMO2). Residue S1225 is modified to Phosphoserine.

Belongs to the TRAFAC class myosin-kinesin ATPase superfamily. Kinesin family. Chromokinesin subfamily. As to quaternary structure, interacts with the cytosolic iron-sulfur protein assembly (CIA) complex components CIAO2B and MMS19; the interactions facilitate the transfer of Fe-S clusters to KIF4A to ensure proper localization of KIF4A to mitotic machinery components. Interacts (via C-terminus) with unphosphorylated PRC1 (via N-terminus); the interaction is required for the progression of mitosis. The cofactor is [2Fe-2S] cluster. [4Fe-4S] cluster is required as a cofactor. In terms of tissue distribution, highly expressed in hematopoietic tissues, fetal liver, spleen, thymus and adult thymus and bone marrow. Lower levels are found in heart, testis, kidney, colon and lung.

Its subcellular location is the nucleus matrix. It is found in the cytoplasm. It localises to the cytoskeleton. The protein localises to the spindle. The protein resides in the midbody. Its subcellular location is the chromosome. Functionally, iron-sulfur (Fe-S) cluster binding motor protein that has a role in chromosome segregation during mitosis. Translocates PRC1 to the plus ends of interdigitating spindle microtubules during the metaphase to anaphase transition, an essential step for the formation of an organized central spindle midzone and midbody and for successful cytokinesis. May play a role in mitotic chromosomal positioning and bipolar spindle stabilization. This chain is Chromosome-associated kinesin KIF4A (KIF4A), found in Homo sapiens (Human).